A 1217-amino-acid polypeptide reads, in one-letter code: ATP-dependent helicase/nuclease subunit A (1217 aa).

The 466-residue stretch at 10 to 475 (VIWTDAQWQS…IDLSQNFRSR (466 aa)) folds into the UvrD-like helicase ATP-binding domain. 31–38 (AAAGSGKT) contributes to the ATP binding site. The 311-residue stretch at 476–786 (KEVLSTTNYI…RMMTIHSSKG (311 aa)) folds into the UvrD-like helicase C-terminal domain.

It belongs to the helicase family. AddA subfamily. In terms of assembly, heterodimer of AddA and AddB/RexB. The cofactor is Mg(2+).

It catalyses the reaction Couples ATP hydrolysis with the unwinding of duplex DNA by translocating in the 3'-5' direction.. The catalysed reaction is ATP + H2O = ADP + phosphate + H(+). Its function is as follows. The heterodimer acts as both an ATP-dependent DNA helicase and an ATP-dependent, dual-direction single-stranded exonuclease. Recognizes the chi site generating a DNA molecule suitable for the initiation of homologous recombination. The AddA nuclease domain is required for chi fragment generation; this subunit has the helicase and 3' -&gt; 5' nuclease activities. The sequence is that of ATP-dependent helicase/nuclease subunit A from Staphylococcus aureus (strain Mu3 / ATCC 700698).